A 620-amino-acid chain; its full sequence is Cilia- and flagella-associated protein 52 (620 aa).

11 WD repeats span residues 62-106 (GHGN…LLAR), 109-150 (LHKG…AICG), 156-195 (LNVGNATNVIFSRCRDEMFMTAGNGTIRVWELDLPNRKIW), 288-327 (QLQGGITSITLRGEGHQFLVGTEESHIYRVSFTDFKETLI), 330-369 (CHFDAVEDIVFPFGTAELFATCAKKDIRVWHTSSNRELLR), 372-411 (VPNMTCHGIDFMRDGKSIISAWNDGKIRAFAPETGRLMYV), 415-454 (AHRIGVTAIATTSDCKRVISGGGEGEVRVWQIGCQTQKLE), 459-498 (EHKSSVSCIRVKRNNEECVTASTDGTCIIWDLVRLRRNQM), 500-539 (LANTLFQCVCYHPEEFQIITSGTDRKIAYWEVFDGTVIRE), 543-582 (SLSGSINGMDITQEGVHFVTGGNDHLVKVWDYNEGEVTHV), and 585-620 (GHSGNITRIRISPGNQYIVSVSADGAILRWKYPYTS).

It belongs to the CFAP52 family. Microtubule inner protein component of sperm flagellar doublet microtubules. Interacts with BRCA2. Interacts with the CCT chaperonin complex. Interacts with HSP70. Interacts with AK8. Interacts with CFAP45. Interacts with DNAI1. Interacts with IQDC. As to expression, expressed in respiratory cells and sperm (at protein level). Highly expressed in testis. Up-regulated in hepatocellular carcinoma (HCC).

The protein localises to the cytoplasm. It is found in the cytoskeleton. Its subcellular location is the cilium axoneme. It localises to the flagellum axoneme. Microtubule inner protein (MIP) part of the dynein-decorated doublet microtubules (DMTs) in cilia axoneme. Important for proper ciliary and flagellar beating. May act in cooperation with CFAP45 and axonemal dynein subunit DNAH11. May play a role in cell growth and/or survival. In Homo sapiens (Human), this protein is Cilia- and flagella-associated protein 52.